Consider the following 269-residue polypeptide: MTVPAFTVVIPARLASTRLPDKPLADIGGRPMIVRVAERAHASSAQRTVVATDAPAVAQACAAHGIEAVLTRADHPSGTDRLSEVAAQLGLADDAIVVNVQGDEPLIEPSLIDEVALHLAHHADCAIATAAHPLQDIAEVFNPNVVKVVCDAAGRALYFSRAPIPWARDAWSGVPAVPAALAQVPLPGMPVLRHIGLYAYRAGFLRRFPTLAAAPLEQTEALEQLRAMWHGERIAVLQTSAAPAPGVDTPADLERVRALWAQSMAQEGP.

The protein belongs to the KdsB family.

It localises to the cytoplasm. The catalysed reaction is 3-deoxy-alpha-D-manno-oct-2-ulosonate + CTP = CMP-3-deoxy-beta-D-manno-octulosonate + diphosphate. The protein operates within nucleotide-sugar biosynthesis; CMP-3-deoxy-D-manno-octulosonate biosynthesis; CMP-3-deoxy-D-manno-octulosonate from 3-deoxy-D-manno-octulosonate and CTP: step 1/1. It participates in bacterial outer membrane biogenesis; lipopolysaccharide biosynthesis. Activates KDO (a required 8-carbon sugar) for incorporation into bacterial lipopolysaccharide in Gram-negative bacteria. The protein is 3-deoxy-manno-octulosonate cytidylyltransferase of Cupriavidus necator (strain ATCC 17699 / DSM 428 / KCTC 22496 / NCIMB 10442 / H16 / Stanier 337) (Ralstonia eutropha).